The primary structure comprises 393 residues: METVAAAGYAHGAATRSPACCAAMSFSQSYRPKAARPATSFYGESLRANTARTSFPAGRQSKAASRAALTTRCAIGDSLEEFLTKATPDKNLIRLLICMGEAMRTIAFKVRTASCGGTACVNSFGDEQLAVDMLADKLLFEALEYSHVCKYACSEEVPELQDMGGPVEGGFSVAFDPLDGSSIVDTNFTVGTIFGVWPGDKLTGVTGGDQVAAAMGIYGPRTTFVVALKDCPGTHEFLLLDEGKWQHVKDTTSIGEGKMFSPGNLRATFDNPDYDKLVNYYVKEKYTLRYTGGMVPDVNQIIVKEKGIFTNVTSPTAKAKLRLLFEVAPLGFLIEKAGGHSSDGKQSVLDKVISVLDERTQVAYGSKNEIIRFEETLYGSSRLAASATVGATA.

A disulfide bridge links Cys-115 with Cys-120. Mg(2+) is bound by residues Asp-126, Glu-155, Asp-176, Leu-178, and Asp-179. Substrate is bound by residues 179–182 (DGSS), Tyr-290, and Lys-320. Mg(2+) is bound at residue Glu-326.

This sequence belongs to the FBPase class 1 family. As to quaternary structure, homodimer. It depends on Mg(2+) as a cofactor.

It is found in the plastid. The protein localises to the chloroplast. It carries out the reaction D-sedoheptulose 1,7-bisphosphate + H2O = D-sedoheptulose 7-phosphate + phosphate. Its pathway is carbohydrate biosynthesis; Calvin cycle. This Triticum aestivum (Wheat) protein is Sedoheptulose-1,7-bisphosphatase, chloroplastic.